The primary structure comprises 311 residues: 4-hydroxyproline 2-epimerase (311 aa).

Cys-88 serves as the catalytic Proton acceptor. Residues 89 to 90, His-208, and Asp-232 each bind substrate; that span reads GH. Cys-236 functions as the Proton donor in the catalytic mechanism. Residue 237–238 coordinates substrate; the sequence is GT.

The protein belongs to the proline racemase family.

The enzyme catalyses trans-4-hydroxy-L-proline = cis-4-hydroxy-D-proline. Catalyzes the epimerization of trans-4-hydroxy-L-proline (t4LHyp) to cis-4-hydroxy-D-proline (c4DHyp). Is likely involved in a degradation pathway that converts t4LHyp to alpha-ketoglutarate. Displays no proline racemase activity. This is 4-hydroxyproline 2-epimerase from Chromohalobacter salexigens (strain ATCC BAA-138 / DSM 3043 / CIP 106854 / NCIMB 13768 / 1H11).